Consider the following 151-residue polypeptide: Ribonuclease H (151 aa).

In terms of domain architecture, RNase H type-1 spans 1-141 (MKNVIIYTDG…ADALANRGID (141 aa)). Mg(2+) contacts are provided by D9, E47, D69, and D133.

This sequence belongs to the RNase H family. As to quaternary structure, monomer. Mg(2+) serves as cofactor.

Its subcellular location is the cytoplasm. It carries out the reaction Endonucleolytic cleavage to 5'-phosphomonoester.. Its function is as follows. Endonuclease that specifically degrades the RNA of RNA-DNA hybrids. This is Ribonuclease H from Alcanivorax borkumensis (strain ATCC 700651 / DSM 11573 / NCIMB 13689 / SK2).